The chain runs to 397 residues: Putative protein FAM47D (397 aa).

It belongs to the FAM47 family.

This Homo sapiens (Human) protein is Putative protein FAM47D (FAM47DP).